The following is a 60-amino-acid chain: Large ribosomal subunit protein bL32 (60 aa).

Belongs to the bacterial ribosomal protein bL32 family.

This is Large ribosomal subunit protein bL32 from Streptococcus sanguinis (strain SK36).